The following is a 151-amino-acid chain: MKCPFCSHPDTQVVETREAEDGGFIRRRRQCGGCDKRFTTYERPEVSFPAIVKKDGRRIEYERAKLLGSFKIALRKRPVSTEQIDAAIERIEERLRNLGEREVLSSRLGEMVMRELKLLDKVGYIRYASVYRSFEDVDDFKNVMDEVRNPG.

The segment at 3-34 (CPFCSHPDTQVVETREAEDGGFIRRRRQCGGC) is a zinc-finger region. An ATP-cone domain is found at 49–139 (PAIVKKDGRR…VYRSFEDVDD (91 aa)).

Belongs to the NrdR family. Zn(2+) serves as cofactor.

Functionally, negatively regulates transcription of bacterial ribonucleotide reductase nrd genes and operons by binding to NrdR-boxes. This chain is Transcriptional repressor NrdR, found in Delftia acidovorans (strain DSM 14801 / SPH-1).